Here is a 65-residue protein sequence, read N- to C-terminus: MLPPIRCFSCGKPLGHLWEEFNERVNKGEDPKKVLDDLGLERYCCRRTLLSAVVVFPVIAKFKKV.

Residues C7, C10, C44, and C45 each coordinate Zn(2+).

The protein belongs to the archaeal Rpo10/eukaryotic RPB10 RNA polymerase subunit family. Part of the RNA polymerase complex. Zn(2+) serves as cofactor.

The protein localises to the cytoplasm. It carries out the reaction RNA(n) + a ribonucleoside 5'-triphosphate = RNA(n+1) + diphosphate. Functionally, DNA-dependent RNA polymerase (RNAP) catalyzes the transcription of DNA into RNA using the four ribonucleoside triphosphates as substrates. The sequence is that of DNA-directed RNA polymerase subunit Rpo10 from Nanoarchaeum equitans (strain Kin4-M).